We begin with the raw amino-acid sequence, 320 residues long: Malate dehydrogenase (320 aa).

Residues 10-15 and Asp34 each bind NAD(+); that span reads GAGMIG. The substrate site is built by Arg83 and Arg89. NAD(+) is bound by residues Asn96 and 119 to 121; that span reads ITN. Asn121 and Arg152 together coordinate substrate. The active-site Proton acceptor is the His176.

The protein belongs to the LDH/MDH superfamily. MDH type 3 family.

The catalysed reaction is (S)-malate + NAD(+) = oxaloacetate + NADH + H(+). In terms of biological role, catalyzes the reversible oxidation of malate to oxaloacetate. The polypeptide is Malate dehydrogenase (Caulobacter vibrioides (strain NA1000 / CB15N) (Caulobacter crescentus)).